We begin with the raw amino-acid sequence, 582 residues long: Arginine--tRNA ligase (582 aa).

The 'HIGH' region signature appears at Ala136–His146.

This sequence belongs to the class-I aminoacyl-tRNA synthetase family. Monomer.

The protein localises to the cytoplasm. The enzyme catalyses tRNA(Arg) + L-arginine + ATP = L-arginyl-tRNA(Arg) + AMP + diphosphate. The chain is Arginine--tRNA ligase from Novosphingobium aromaticivorans (strain ATCC 700278 / DSM 12444 / CCUG 56034 / CIP 105152 / NBRC 16084 / F199).